Consider the following 106-residue polypeptide: N(4)-acetylcytidine amidohydrolase (106 aa).

The ASCH domain occupies 9-105 (TFFEFLTPLI…ELYVIEYELI (97 aa)). The Proton acceptor role is filled by K23. The active-site Nucleophile is T26. E76 (proton donor) is an active-site residue.

It belongs to the N(4)-acetylcytidine amidohydrolase family.

It carries out the reaction N(4)-acetylcytidine + H2O = cytidine + acetate + H(+). The catalysed reaction is N(4)-acetyl-2'-deoxycytidine + H2O = 2'-deoxycytidine + acetate + H(+). It catalyses the reaction N(4)-acetylcytosine + H2O = cytosine + acetate + H(+). Its function is as follows. Catalyzes the hydrolysis of N(4)-acetylcytidine (ac4C). In Vibrio campbellii (strain ATCC BAA-1116), this protein is N(4)-acetylcytidine amidohydrolase.